We begin with the raw amino-acid sequence, 590 residues long: Multidrug and toxin extrusion protein 1 (590 aa).

Topologically, residues Met1–Leu59 are cytoplasmic. Residues Ala60–Phe80 traverse the membrane as a helical segment. Residues Cys81–Glu88 lie on the Extracellular side of the membrane. A helical membrane pass occupies residues Leu89–Gly109. Residues Leu110 to Gly137 lie on the Cytoplasmic side of the membrane. The helical transmembrane segment at Ile138–Ile158 threads the bilayer. Topologically, residues Leu159–Asn167 are extracellular. Residues Val168–Met188 traverse the membrane as a helical segment. At Tyr189–Gln199 the chain is on the cytoplasmic side. A helical transmembrane segment spans residues Gly200–Val222. The Extracellular segment spans residues Phe223–Val231. Residues Ala232–Arg254 traverse the membrane as a helical segment. At Trp255–Trp274 the chain is on the cytoplasmic side. Residues Gly275–Thr294 form a helical membrane-spanning segment. The Extracellular segment spans residues Tyr295–Gln313. A helical transmembrane segment spans residues Ser314–Ala334. At Ser335–Lys351 the chain is on the cytoplasmic side. The chain crosses the membrane as a helical span at residues Leu352–Ile372. At Gly373–Gln395 the chain is on the extracellular side. The helical transmembrane segment at Val396 to Ile416 threads the bilayer. At Val417 to Asn430 the chain is on the cytoplasmic side. A helical membrane pass occupies residues Ile431 to Met451. Residue Gly452 is a topological domain, extracellular. Residues Ile453 to Ile473 traverse the membrane as a helical segment. Residues Leu474 to Gly565 lie on the Cytoplasmic side of the membrane. A helical membrane pass occupies residues Leu566 to Val586. Residues Arg587–Arg590 lie on the Extracellular side of the membrane.

Belongs to the multi antimicrobial extrusion (MATE) (TC 2.A.66.1) family.

The protein localises to the cell membrane. Functionally, solute transporter for tetraethylammonium (TEA), cimetidine, metformin, guanidine, N-methylnicotinamide (NMN) and also the zwitterionic cephalosporin cephalexin. Responsible for the secretion of cationic drugs across the brush border membranes. The protein is Multidrug and toxin extrusion protein 1 (slc47a1) of Danio rerio (Zebrafish).